The following is a 137-amino-acid chain: Ribosome-binding factor A (137 aa).

The protein belongs to the RbfA family. As to quaternary structure, monomer. Binds 30S ribosomal subunits, but not 50S ribosomal subunits or 70S ribosomes.

The protein resides in the cytoplasm. Functionally, one of several proteins that assist in the late maturation steps of the functional core of the 30S ribosomal subunit. Associates with free 30S ribosomal subunits (but not with 30S subunits that are part of 70S ribosomes or polysomes). Required for efficient processing of 16S rRNA. May interact with the 5'-terminal helix region of 16S rRNA. The polypeptide is Ribosome-binding factor A (Synechococcus sp. (strain ATCC 27144 / PCC 6301 / SAUG 1402/1) (Anacystis nidulans)).